The chain runs to 725 residues: Polyribonucleotide nucleotidyltransferase (725 aa).

Positions 488 and 494 each coordinate Mg(2+). The KH domain maps to 555-614 (PRMITMKIHPDKIREVIGKGGSTIQALTKETGTTIDIQEDGTITIASTSTDGMAEAKRRI). The 69-residue stretch at 624–692 (GKIYAGTVLK…EKGRLRLSLK (69 aa)) folds into the S1 motif domain. Residues 702-725 (ISPIAQGDAPAAAPAAPASPDQQQ) are disordered. The span at 706–725 (AQGDAPAAAPAAPASPDQQQ) shows a compositional bias: low complexity.

Belongs to the polyribonucleotide nucleotidyltransferase family. Requires Mg(2+) as cofactor.

Its subcellular location is the cytoplasm. It catalyses the reaction RNA(n+1) + phosphate = RNA(n) + a ribonucleoside 5'-diphosphate. Involved in mRNA degradation. Catalyzes the phosphorolysis of single-stranded polyribonucleotides processively in the 3'- to 5'-direction. This Cupriavidus metallidurans (strain ATCC 43123 / DSM 2839 / NBRC 102507 / CH34) (Ralstonia metallidurans) protein is Polyribonucleotide nucleotidyltransferase.